A 267-amino-acid chain; its full sequence is U6 snRNA phosphodiesterase 1 (267 aa).

Positions 1–13 (MSSAPLVGYSSSG) are enriched in polar residues. The tract at residues 1–74 (MSSAPLVGYS…DSAKHGGRIR (74 aa)) is disordered. Histidine 122 serves as the catalytic Proton acceptor. 122–124 (HVS) contacts AMP. UMP is bound by residues glutamine 166, tyrosine 204, and 208 to 212 (SFHIS). Residues tyrosine 204 and 206-212 (DPSFHIS) contribute to the AMP site. The active-site Proton donor is the histidine 210.

It belongs to the 2H phosphoesterase superfamily. USB1 family. As to quaternary structure, interacts with PLRG1, CDC5L and PRPF19.

Its subcellular location is the nucleus. It carries out the reaction a 3'-end uridylyl-uridine-RNA = a 3'-end 2',3'-cyclophospho-uridine-RNA + uridine. The catalysed reaction is a 3'-end uridylyl-adenosine-RNA = a 3'-end 2',3'-cyclophospho-uridine-RNA + adenosine. 3'-5' RNA exonuclease that trims the 3' end of oligo(U) and oligo(A) tracts of the pre-U6 small nuclear RNA (snRNA) molecule, leading to the formation of a mature U6 snRNA 3' end-terminated with a 2',3'-cyclic phosphate. Participates in the U6 snRNA 3' end processing that prevents U6 snRNA degradation. In addition also removes uridines from the 3' end of U6atac snRNA and possibly the vault RNA VTRNA1-1. The polypeptide is U6 snRNA phosphodiesterase 1 (Mus musculus (Mouse)).